The chain runs to 575 residues: Jasmonoyl--L-amino acid synthetase JAR1 (575 aa).

A coiled-coil region spans residues 10 to 30; that stretch reads MNRVIDEFDEMTRNAHQVQKQ. An ATP-binding site is contributed by serine 98. Position 101 (serine 101) interacts with jasmonate. ATP contacts are provided by residues methionine 118, threonine 121, glycine 163, asparagine 168, and 331–336; that span reads GSSEGW. Residue 166–170 coordinates an L-alpha-amino acid; sequence TTNVY. Residue 328–331 coordinates jasmonate; it reads HDYG. 530–534 lines the an L-alpha-amino acid pocket; that stretch reads KIQEH. Lysine 557 contacts ATP.

It belongs to the IAA-amido conjugating enzyme family. In terms of assembly, interacts with GSTU20/FIP1 under continuous far red (cFR) light; this binding increases its activity and determines the priority of substrate binding.

The protein resides in the cytoplasm. The catalysed reaction is a jasmonate + an L-alpha-amino acid + ATP = a jasmonyl-L-amino acid + AMP + diphosphate + H(+). It catalyses the reaction (+)-7-isojasmonate + L-isoleucine + ATP = L-isoleucine-(+)-7-isojasmonate + AMP + diphosphate + H(+). Its activity is regulated as follows. Activated by GSTU20/FIP1. Functionally, catalyzes the synthesis of jasmonates-amino acid conjugates by adenylation; can use Ile and, in vitro at least, Val, Leu and Phe as conjugating amino acids on jasmonic acid (JA) and 9,10-dihydro-JA substrates, and to a lower extent, on 3-oxo-2-(2Z-pentenyl)-cyclopentane-1-butyric acid (OPC-4) and 12-hydroxy-JA (12-OH-JA). Can synthesize adenosine 5-tetraphosphate in vitro. Required for the JA-mediated signaling pathway that regulates many developmental and defense mechanisms, including growth root inhibition, vegetative storage proteins (VSPs) accumulation, induced systemic resistance (ISR), response to wounding and herbivores, tolerance to ozone O(3) (probably having a role in lesion containment). Plays an important role in the accumulation of JA-Ile in response to wounding, both locally and systemically; promotes JA responding genes especially in distal part of wounded plants, via the JA-Ile-stimulated degradation of JAZ repressor proteins by the SCF(COI)E3 ubiquitin-protein ligase pathway. Involved in the apoptosis-like programmed cell death (PCD) induced by fungal toxin fumonisin B1-mediated (FB1). Required for volatile compounds (C6-aldehydes and allo-ocimene)-mediated defense activation. Involved in the non-pathogenic rhizobacterium-mediated ISR (defense priming) by P.fluorescens (strains CHAOr and WCS417r) and P.putida LSW17S against infection leaf pathogens such as P.syringae pv. tomato and H.parasitica. Required for the JA-dependent resistance to fungi such as P.irregulare, U.vignae and U.appendiculatus. Necessary to induce systemic resistance against R.solanaceraum and P.syringae pv. tomato with P.oligandrum (a non-pathogenic biocontrol agent) cell wall protein fraction (CWP). Mediates PGIP2 accumulation in response to B.cinerea infection and thus contributes to resistance against this pathogen. Modulates the UV-B alteration of leaves attractiveness to diamondback moths P.xylostella leading to insect oviposition. Involved in the regulation of far-red light influence on development, being an actor of the interplay between light and JA signaling. Seems necessary for the salicylic acid (SA)-mediated, NPR1-independent resistance pathway. May contribute to the chitin-elicited pathway. Contributes to the sensitivity toward F.graminearum. The sequence is that of Jasmonoyl--L-amino acid synthetase JAR1 from Arabidopsis thaliana (Mouse-ear cress).